We begin with the raw amino-acid sequence, 199 residues long: Lysine exporter LysE (199 aa).

A run of 5 helical transmembrane segments spans residues 6–26 (VVGFLACFTLIAAIGAQNAFV), 42–62 (LCTVSDIVLIAAGIAGFGALI), 68–88 (ALNVVKFGGAAFLIGYGLLAA), 144–164 (WLFGLGAVTASAVWFATLGFG), and 178–198 (WRILDGLIAVMMVALGISLTV).

It belongs to the LysE/ArgO transporter (TC 2.A.75) family.

It is found in the cell inner membrane. Its function is as follows. Catalyzes the efflux of L-lysine. This chain is Lysine exporter LysE, found in Mycobacterium bovis (strain ATCC BAA-935 / AF2122/97).